We begin with the raw amino-acid sequence, 426 residues long: Serine--tRNA ligase (426 aa).

The segment covering 41 to 60 has biased composition (polar residues); the sequence is QTRTEQLQAERNARSKSIGQ. The disordered stretch occupies residues 41–64; the sequence is QTRTEQLQAERNARSKSIGQAKQR. 233–235 lines the L-serine pocket; the sequence is TAE. An ATP-binding site is contributed by 264-266; the sequence is RSE. Residue glutamate 287 participates in L-serine binding. 351 to 354 serves as a coordination point for ATP; it reads EISS. An L-serine-binding site is contributed by serine 387.

This sequence belongs to the class-II aminoacyl-tRNA synthetase family. Type-1 seryl-tRNA synthetase subfamily. As to quaternary structure, homodimer. The tRNA molecule binds across the dimer.

Its subcellular location is the cytoplasm. It catalyses the reaction tRNA(Ser) + L-serine + ATP = L-seryl-tRNA(Ser) + AMP + diphosphate + H(+). The catalysed reaction is tRNA(Sec) + L-serine + ATP = L-seryl-tRNA(Sec) + AMP + diphosphate + H(+). The protein operates within aminoacyl-tRNA biosynthesis; selenocysteinyl-tRNA(Sec) biosynthesis; L-seryl-tRNA(Sec) from L-serine and tRNA(Sec): step 1/1. Functionally, catalyzes the attachment of serine to tRNA(Ser). Is also able to aminoacylate tRNA(Sec) with serine, to form the misacylated tRNA L-seryl-tRNA(Sec), which will be further converted into selenocysteinyl-tRNA(Sec). This chain is Serine--tRNA ligase, found in Pseudomonas fluorescens (strain ATCC BAA-477 / NRRL B-23932 / Pf-5).